The chain runs to 516 residues: MLSINDLNMDVILHLLTFLTDKNKLNFMMTCTHLYQFISCVKYNNFQLFDKIRGLSFRNNFKKIIYFKEIKERENKNTVFVLKSNRDKIPLGTTCIKTGRYFNFLEMGVIPEGIISLEFCEYFNHTLKKGHIPETVTHLTINNGFRHMEKGSIPNSVTHLIFGENFNKMIDVGVIPNSVVYLKFGRVFNQSIKNVIPHNVKYLSLMYSFNQPISEEIYIDDTLKTISYIPKSVKYFDYETSNDEFDFKILSENITYLNIIINKHIYPGDIPSSVTRLGLLSNEDVRPEAIPDNVTHLSFDLYYFGNYSLNQLIHKNITHLNLGDLSVSCDRIPNGVTHLTYNPKYLTKNSIPNSVTHLTINNKIKGSIDRCIPNSVVYLNFNGTYDNIIYKGDIPDNVRCLIFGNNFDQYIEEGAIPNSVVCLNFGKLYNKPVNNVIPNNVKNLTFGYEFNKPIENAIPNNTNHIEFGYMFNQSLKNSIPDSVTRLVFNYGLKSIYKINKKFMNNIPKTVSVILFR.

The F-box domain maps to 4 to 49 (INDLNMDVILHLLTFLTDKNKLNFMMTCTHLYQFISCVKYNNFQLF). FNIP repeat units follow at residues 123–165 (FNHT…FGEN), 166–208 (FNKM…LMYS), 341–383 (YNPK…NFNG), 385–428 (YDNI…FGKL), and 429–470 (YNKP…FGYM).

This is Putative F-box and FNIP repeat-containing protein L414 from Acanthamoeba polyphaga (Amoeba).